The primary structure comprises 310 residues: Ceramide synthase LOH1 (310 aa).

A run of 6 helical transmembrane segments spans residues 16–36 (SFPTYQDLGFLPLFAVFFPTI), 85–105 (CIYYLSAELLALSVTYNEPWF), 131–151 (FLYMFAAGFYTYSIFALVFWE), 157–177 (FGVSMGHHITTLVLIVLSYIC), 216–236 (FVLFALSWVVLRLIYYPFWIL), and 260–280 (YMFNTLLYFLLVLHIFWWVLI). The region spanning 76–289 (RKFKESAWKC…IYRMLVKQVQ (214 aa)) is the TLC domain. Phosphoserine is present on residues Ser300 and Ser302.

As to expression, expressed ubiquitously at high levels. Not observed in pollen.

It is found in the endoplasmic reticulum membrane. The enzyme catalyses (4R)-hydroxysphinganine + a fatty acyl-CoA = an N-acyl-(4R)-4-hydroxysphinganine + CoA + H(+). It catalyses the reaction hexacosanoyl-CoA + (4R)-hydroxysphinganine = N-hexacosanoyl-(4R)-hydroxysphinganine + CoA + H(+). The catalysed reaction is tetracosanoyl-CoA + (4R)-hydroxysphinganine = N-tetracosanoyl-(4R)-hydroxysphinganine + CoA + H(+). The protein operates within sphingolipid metabolism. Its activity is regulated as follows. Inhibited by the mycotoxin fumonisin B(1), a sphingosine analog mycotoxins produced by pathogenic fungi. Repressed by divalent cation such as magnesium Mg(2+), copper Cu(2+), zinc Zn(2+), manganese Mn(2+), calcium Ca(2+) and cobalt Co(2+). Functionally, essential for plant growth, promotes cell division in root meristems. Catalyzes the biosynthesis of ceramide sphingolipids with C(16) to C(28) fatty acids, structural membrane lipids involved in membrane trafficking (e.g. early endosomes) and cell polarity (e.g. polar auxin transport related proteins); mostly active with t18:0 and saturated very long saturated fatty acids (C24:0 and C26:0), such as long-chain base (LCB) phytosphingosine (t18:0), lignoceroyl- and hexacosanoyl-CoAs. Mediates resistance to sphinganine-analog mycotoxins (SAMs, e.g. fumonisin B(1)) by restoring the sphingolipid biosynthesis. Could salvage the transport of GPI-anchored proteins from the endoplasmic reticulum to the Golgi apparatus in ceramides-depleted cells after SAM exposure. May prevent precocious cell death by delaying PR1 accumulation during aging. Contributes to hypoxic conditions tolerance (e.g. submergences), especially in the dark, by promoting the formation of very-long-chain (VLC) ceramide species (22:1, 24:1 and 26:1) and of VLC unsaturated ceramides, which are modulating CTR1-mediated ethylene signaling leading to endoplasmic reticulum (ER)-to-nucleus translocation of EIN2 and EIN3. The sequence is that of Ceramide synthase LOH1 from Arabidopsis thaliana (Mouse-ear cress).